The chain runs to 628 residues: DNA mismatch repair protein MutL (628 aa).

The tract at residues 335–411 (SVDIEPESEQ…ASRNSEVSLP (77 aa)) is disordered. The span at 343–353 (EQTTAWQTSPT) shows a compositional bias: polar residues.

Belongs to the DNA mismatch repair MutL/HexB family.

In terms of biological role, this protein is involved in the repair of mismatches in DNA. It is required for dam-dependent methyl-directed DNA mismatch repair. May act as a 'molecular matchmaker', a protein that promotes the formation of a stable complex between two or more DNA-binding proteins in an ATP-dependent manner without itself being part of a final effector complex. The chain is DNA mismatch repair protein MutL from Shewanella pealeana (strain ATCC 700345 / ANG-SQ1).